The primary structure comprises 689 residues: Methionine--tRNA ligase (689 aa).

Positions 16 to 26 (PYANAGLHLGH) match the 'HIGH' region motif. Residues cysteine 147, cysteine 150, cysteine 160, and cysteine 163 each contribute to the Zn(2+) site. Residues 342-346 (KMSKS) carry the 'KMSKS' region motif. Lysine 345 is a binding site for ATP. Positions 585–689 (DFAKVDLRVG…AGVKPGMRVG (105 aa)) constitute a tRNA-binding domain.

The protein belongs to the class-I aminoacyl-tRNA synthetase family. MetG type 1 subfamily. In terms of assembly, homodimer. Requires Zn(2+) as cofactor.

Its subcellular location is the cytoplasm. It catalyses the reaction tRNA(Met) + L-methionine + ATP = L-methionyl-tRNA(Met) + AMP + diphosphate. Is required not only for elongation of protein synthesis but also for the initiation of all mRNA translation through initiator tRNA(fMet) aminoacylation. This is Methionine--tRNA ligase from Chromobacterium violaceum (strain ATCC 12472 / DSM 30191 / JCM 1249 / CCUG 213 / NBRC 12614 / NCIMB 9131 / NCTC 9757 / MK).